Here is an 872-residue protein sequence, read N- to C-terminus: Alanine--tRNA ligase (872 aa).

Positions 566, 570, 668, and 672 each coordinate Zn(2+).

The protein belongs to the class-II aminoacyl-tRNA synthetase family. It depends on Zn(2+) as a cofactor.

Its subcellular location is the cytoplasm. The enzyme catalyses tRNA(Ala) + L-alanine + ATP = L-alanyl-tRNA(Ala) + AMP + diphosphate. Catalyzes the attachment of alanine to tRNA(Ala) in a two-step reaction: alanine is first activated by ATP to form Ala-AMP and then transferred to the acceptor end of tRNA(Ala). Also edits incorrectly charged Ser-tRNA(Ala) and Gly-tRNA(Ala) via its editing domain. This chain is Alanine--tRNA ligase, found in Lactococcus lactis subsp. lactis (strain IL1403) (Streptococcus lactis).